Here is an 83-residue protein sequence, read N- to C-terminus: Small ribosomal subunit protein uS17 (83 aa).

Belongs to the universal ribosomal protein uS17 family. Part of the 30S ribosomal subunit.

Functionally, one of the primary rRNA binding proteins, it binds specifically to the 5'-end of 16S ribosomal RNA. The chain is Small ribosomal subunit protein uS17 from Nitratiruptor sp. (strain SB155-2).